Here is a 349-residue protein sequence, read N- to C-terminus: DNA replication and repair protein RecF (349 aa).

An ATP-binding site is contributed by 30 to 37 (GKNGSGKT).

The protein belongs to the RecF family.

The protein resides in the cytoplasm. The RecF protein is involved in DNA metabolism; it is required for DNA replication and normal SOS inducibility. RecF binds preferentially to single-stranded, linear DNA. It also seems to bind ATP. The protein is DNA replication and repair protein RecF of Francisella tularensis subsp. holarctica (strain FTNF002-00 / FTA).